Reading from the N-terminus, the 76-residue chain is Defensin-like protein 122 (76 aa).

The first 25 residues, 1-25 (MSKTTVIAIFMVVLVLGLVTKETQG), serve as a signal peptide directing secretion. Intrachain disulfides connect Cys29–Cys74, Cys39–Cys60, Cys44–Cys68, and Cys48–Cys70.

The protein belongs to the DEFL family. As to expression, expressed in flower buds, but not in stems, roots or rosette leaves.

The protein localises to the secreted. This chain is Defensin-like protein 122 (LCR30), found in Arabidopsis thaliana (Mouse-ear cress).